Reading from the N-terminus, the 866-residue chain is FHIP family protein v1g243165 (866 aa).

Disordered regions lie at residues 739-761 and 781-814; these read RDGP…ASTS and GSTA…ESQT. A compositionally biased stretch (low complexity) spans 751–761; it reads SIGSIGSASTS.

This sequence belongs to the FHIP family.

The protein is FHIP family protein v1g243165 of Nematostella vectensis (Starlet sea anemone).